Consider the following 122-residue polypeptide: Small ribosomal subunit protein uS13c (122 aa).

This sequence belongs to the universal ribosomal protein uS13 family. As to quaternary structure, part of the 30S ribosomal subunit.

It is found in the plastid. Its subcellular location is the chloroplast. In terms of biological role, located at the top of the head of the 30S subunit, it contacts several helices of the 16S rRNA. The sequence is that of Small ribosomal subunit protein uS13c from Cyanidium caldarium (Red alga).